A 279-amino-acid polypeptide reads, in one-letter code: Lysozyme-like protein 2 (279 aa).

An N-terminal signal peptide occupies residues 1 to 19 (MIKLLVSFTILFVLSSARP). Positions 47–265 (MGNAVDFSFP…AAAPKTEVNM (219 aa)) constitute a Ch-type lysozyme domain.

The protein belongs to the glycosyl hydrolase 25 family. In terms of tissue distribution, expressed in intestine.

Its function is as follows. Involved in resistance to Gram-positive bacteria P.aeruginosa or B.thuringiensis infection. The polypeptide is Lysozyme-like protein 2 (Caenorhabditis elegans).